Consider the following 344-residue polypeptide: Large ribosomal subunit protein uL3 (344 aa).

This sequence belongs to the universal ribosomal protein uL3 family. As to quaternary structure, part of the 50S ribosomal subunit. Forms a cluster with proteins L14 and L24e.

Its function is as follows. One of the primary rRNA binding proteins, it binds directly near the 3'-end of the 23S rRNA, where it nucleates assembly of the 50S subunit. This chain is Large ribosomal subunit protein uL3, found in Aeropyrum pernix (strain ATCC 700893 / DSM 11879 / JCM 9820 / NBRC 100138 / K1).